Here is a 422-residue protein sequence, read N- to C-terminus: UDP-N-acetylglucosamine 1-carboxyvinyltransferase (422 aa).

22–23 (KN) is a binding site for phosphoenolpyruvate. A UDP-N-acetyl-alpha-D-glucosamine-binding site is contributed by Arg93. The Proton donor role is filled by Cys117. Cys117 carries the post-translational modification 2-(S-cysteinyl)pyruvic acid O-phosphothioketal. Residues 122 to 126 (RPVDQ), Asp305, and Ile327 contribute to the UDP-N-acetyl-alpha-D-glucosamine site.

It belongs to the EPSP synthase family. MurA subfamily.

Its subcellular location is the cytoplasm. It catalyses the reaction phosphoenolpyruvate + UDP-N-acetyl-alpha-D-glucosamine = UDP-N-acetyl-3-O-(1-carboxyvinyl)-alpha-D-glucosamine + phosphate. The protein operates within cell wall biogenesis; peptidoglycan biosynthesis. In terms of biological role, cell wall formation. Adds enolpyruvyl to UDP-N-acetylglucosamine. The chain is UDP-N-acetylglucosamine 1-carboxyvinyltransferase from Bordetella parapertussis (strain 12822 / ATCC BAA-587 / NCTC 13253).